The primary structure comprises 139 residues: Gastrula zinc finger protein XlCGF67.1 (139 aa).

5 consecutive C2H2-type zinc fingers follow at residues Val6–His28, Tyr33–His55, Tyr61–His83, Phe89–His111, and Phe117–His139.

It belongs to the krueppel C2H2-type zinc-finger protein family.

The protein localises to the nucleus. In terms of biological role, may be involved in transcriptional regulation. This chain is Gastrula zinc finger protein XlCGF67.1, found in Xenopus laevis (African clawed frog).